Here is a 363-residue protein sequence, read N- to C-terminus: MKKTLAALIVGAFAASAANAAVVYNNEGTNVELGGRLSIIAEQSNSTIKDQKQQHGALRNQSSRFHIKATHNFGDGFYAQGYLETRLVSAQSGTESDNFGHIITKYAYVTLGNKAFGEVKLGRAKTIADGITSAEDKEYGVLNNSKYIPTNGNTVGYTFKGIDGLVLGANYLLAQERNKYGTGVGEVTSQSISNGVQVGAKYDANNIIVGIAYGRTNYREDVSQQDDAGKKQQVNGALSTLGYRFSDLGLLVSLDSGYAKTKNYKDKHEKRYFVSPGFQYELMEDTNLYGNFKYERNSVDQGKKEREHAVLFGVDHKLHKQVLTYIEGAYARTRTTTRDTTKNTSTVKTEKEKSVGVGLRVYF.

The N-terminal stretch at 1 to 20 (MKKTLAALIVGAFAASAANA) is a signal peptide.

This sequence belongs to the Gram-negative porin family. In terms of assembly, homotrimer.

It localises to the cell outer membrane. In terms of biological role, forms pores that allow passive diffusion of small molecules across the outer membrane. This Haemophilus influenzae protein is Outer membrane protein P2 (ompP2).